The primary structure comprises 259 residues: Nuclear egress protein 1 (259 aa).

The CCCH-type zinc-finger motif lies at 80 to 184 (CLDLSPYANE…YVVFQTRTLH (105 aa)).

Belongs to the herpesviridae NEC1 protein family. Forms a heterohexameric complex with NEC2. Interacts with capsid vertex specific component 2/CVC2; this interaction directs the capsid to the host inner nuclear membrane to initiate budding. Phosphorylated at serine residues in the N-terminus. This phosphorylation regulates the localization within the inner nuclear membrane.

The protein resides in the host nucleus inner membrane. In terms of biological role, plays an essential role in virion nuclear egress, the first step of virion release from infected cell. Within the host nucleus, NEC1 interacts with the newly formed capsid through the vertexes and directs it to the inner nuclear membrane by associating with NEC2. Induces the budding of the capsid at the inner nuclear membrane as well as its envelopment into the perinuclear space. There, the NEC1/NEC2 complex promotes the fusion of the enveloped capsid with the outer nuclear membrane and the subsequent release of the viral capsid into the cytoplasm where it will reach the secondary budding sites in the host Golgi or trans-Golgi network. This Homo sapiens (Human) protein is Nuclear egress protein 1.